Reading from the N-terminus, the 283-residue chain is MKDITTWIDEYQKGSRFGLKGKVLLKKNSKFQEILIIESDYYGKALMLDRCWMTSMRDEKYYHECLVHPALSSIKEKSRILIIGGGDGGTARECLKYSQVEKIDLVEIDEEVIKASKKFLQEIGGTAWIDKRLTIHIDDGVKWVEKAKNNFYDCIFIDCSDPSEFSNLLFTDTFYKECKRILTQKGILATQSESPESFKNIHIHILKSLKKVFKLSETMYSFVPIYPSGIWSWTFASKGELNLSTPCCNEVTTIEKGCDIWNLNFQNAAFKMMPNKIVKELNS.

One can recognise a PABS domain in the interval 5 to 238; the sequence is TTWIDEYQKG…GIWSWTFASK (234 aa). Q32 is a binding site for S-methyl-5'-thioadenosine. Residues H63 and D87 each coordinate spermidine. Residues E107 and 139–140 contribute to the S-methyl-5'-thioadenosine site; that span reads DG. Residue D158 is the Proton acceptor of the active site. 158 to 161 lines the spermidine pocket; sequence DCSD.

It belongs to the spermidine/spermine synthase family. In terms of assembly, homodimer or homotetramer.

The protein resides in the cytoplasm. The catalysed reaction is S-adenosyl 3-(methylsulfanyl)propylamine + putrescine = S-methyl-5'-thioadenosine + spermidine + H(+). The protein operates within amine and polyamine biosynthesis; spermidine biosynthesis; spermidine from putrescine: step 1/1. In terms of biological role, catalyzes the irreversible transfer of a propylamine group from the amino donor S-adenosylmethioninamine (decarboxy-AdoMet) to putrescine (1,4-diaminobutane) to yield spermidine. This is Polyamine aminopropyltransferase from Prochlorococcus marinus (strain MIT 9515).